We begin with the raw amino-acid sequence, 195 residues long: Ethylene-responsive transcription factor ERF018 (195 aa).

Residues 1–13 (MVKQAMKEEEKKR) are compositionally biased toward basic and acidic residues. Residues 1-22 (MVKQAMKEEEKKRNTAMQSKYK) form a disordered region. The segment at residues 20–77 (KYKGVRKRKWGKWVSEIRLPHSRERIWLGSYDTPEKAARAFDAAQFCLRGGDANFNFP) is a DNA-binding region (AP2/ERF).

It belongs to the AP2/ERF transcription factor family. ERF subfamily.

It localises to the nucleus. Probably acts as a transcriptional activator. Binds to the GCC-box pathogenesis-related promoter element. May be involved in the regulation of gene expression by stress factors and by components of stress signal transduction pathways. The protein is Ethylene-responsive transcription factor ERF018 (ERF018) of Arabidopsis thaliana (Mouse-ear cress).